Reading from the N-terminus, the 182-residue chain is MQNTKLYSLTLIALGAAIIAVLSPLAIPIGIVPVTLQTLAVGLVATVLKARETFFAILLYLLLGFIGIPVFTGGTSGIAVLFGPTGGFLLAFLVMGTLISWGLHQIKYKTIPAFIINIVGHLLMLVIGTLWLKFFTQVDWSLALKLGFTPFVFVEIIKAILVTIFGLALIRALSHTNKYFTN.

Transmembrane regions (helical) follow at residues 12 to 32 (IALG…IGIV), 54 to 74 (FFAI…FTGG), 78 to 98 (IAVL…MGTL), 111 to 131 (IPAF…GTLW), and 150 to 170 (PFVF…LALI).

This sequence belongs to the BioY family. As to quaternary structure, in E.coli forms a stable energy-coupling factor (ECF) transporter complex composed of 2 membrane-embedded substrate-binding protein (S component), 2 ATP-binding proteins (A and A' components) and 2 transmembrane proteins (T component), probably with a stoichiometry of 2:1:1:2. May be able to interact with more than 1 S component at a time.

The protein resides in the cell membrane. Its function is as follows. Probably a biotin-binding protein that interacts with the energy-coupling factor (ECF) ABC-transporter complex. Unlike classic ABC transporters this ECF transporter provides the energy necessary to transport a number of different substrates. The substrates themselves are bound by transmembrane, not extracytoplasmic soluble proteins. This is Biotin transporter BioY2 (bioY2) from Lactococcus lactis subsp. cremoris (strain MG1363).